A 1034-amino-acid chain; its full sequence is Integrin alpha-V (1034 aa).

The signal sequence occupies residues 1-19 (MAALRASLLLSCALTAARA). At 20–978 (FNLDAERPAV…WGIQPQPMPV (959 aa)) the chain is on the extracellular side. 7 FG-GAP repeats span residues 21–86 (NLDA…RNCQ), 97–158 (DFAP…VEYA), 161–213 (RSTT…LAKY), 225–279 (QLAT…GKNM), 280–345 (SSMY…GGFQ), 346–403 (IAKL…GLNA), and 407–470 (RILE…VNPT). N-linked (GlcNAc...) asparagine glycosylation occurs at N62. Disulfide bonds link C77/C85, C126/C146, and C160/C173. Residues D248, D252, I254, and D256 each coordinate Ca(2+). N-linked (GlcNAc...) asparagine glycans are attached at residues N278 and N284. 15 residues coordinate Ca(2+): D302, N304, D306, Y308, D310, D367, D369, D371, F373, D375, D431, D433, N435, Y437, and D439. Intrachain disulfides connect C479–C488 and C494–C551. N540 and N601 each carry an N-linked (GlcNAc...) asparagine glycan. 2 cysteine pairs are disulfide-bonded: C612-C618 and C684-C697. N-linked (GlcNAc...) asparagine glycans are attached at residues N690, N821, N837, and N860. Intrachain disulfides connect C838-C900 and C890-C895. N931, N951, N959, and N966 each carry an N-linked (GlcNAc...) asparagine glycan. A helical membrane pass occupies residues 979-1002 (PVWVIILAVLAGLLLLAVLVLVMY). Topologically, residues 1003 to 1034 (RMGFFKRVRPPQEEQEREQLQPHENGEGTSEA) are cytoplasmic. The GFFKR motif signature appears at 1005–1009 (GFFKR). A compositionally biased stretch (basic and acidic residues) spans 1013–1028 (PQEEQEREQLQPHENG). Residues 1013-1034 (PQEEQEREQLQPHENGEGTSEA) are disordered.

It belongs to the integrin alpha chain family. Heterodimer of an alpha and a beta subunit. The alpha subunit is composed of a heavy and a light chain linked by a disulfide bond. Alpha-V (ITGAV) associates with either beta-1 (ITGB1), beta-3 (ITGB3), beta-5 (ITGB5), beta-6 (ITGB6) or beta-8 (ITGB8). Interacts with RAB25. Interacts with CIB1. Integrins ITGAV:ITGB3 and ITGAV:ITGB5 interact with FBLN5 (via N-terminus). ITGAV:ITGB3 and ITGAV:ITGB5 interact with CCN3. ITGAV:ITGB3 interacts with ADGRA2. ITGAV:ITGB3 interacts with FGF2; it is likely that FGF2 can simultaneously bind ITGAV:ITGB3 and FGF receptors. ITGAV:ITGB3 is found in a ternary complex with CX3CR1 and CX3CL1. ITGAV:ITGB3 is found in a ternary complex with NRG1 and ERBB3. ITGAV:ITGB3 is found in a ternary complex with FGF1 and FGFR1. ITGAV:ITGB3 is found in a ternary complex with IGF1 and IGF1R. ITGAV:ITGB3 interacts with IGF2. ITGAV:ITGB3 and ITGAV:ITGB6 interact with FBN1. ITGAV:ITGB3 interacts with CD9, CD81 and CD151 (via second extracellular domain). ITGAV:ITGB6 interacts with TGFB1.

It is found in the membrane. The protein resides in the cell junction. Its subcellular location is the focal adhesion. In terms of biological role, the alpha-V (ITGAV) integrins are receptors for vitronectin, cytotactin, fibronectin, fibrinogen, laminin, matrix metalloproteinase-2, osteopontin, osteomodulin, prothrombin, thrombospondin, TGFB1 and vWF. They recognize the sequence R-G-D in a wide array of ligands. Alpha-V integrins may play a role in embryo implantation, angiogenesis and wound healing. ITGAV:ITGB3 binds to fractalkine (CX3CL1) and may act as its coreceptor in CX3CR1-dependent fractalkine signaling. ITGAV:ITGB3 binds to NRG1 (via EGF domain) and this binding is essential for NRG1-ERBB signaling. ITGAV:ITGB3 binds to FGF1 and this binding is essential for FGF1 signaling. ITGAV:ITGB3 binds to FGF2 and this binding is essential for FGF2 signaling. ITGAV:ITGB3 binds to IGF1 and this binding is essential for IGF1 signaling. ITGAV:ITGB3 binds to IGF2 and this binding is essential for IGF2 signaling. ITGAV:ITGB3 binds to IL1B and this binding is essential for IL1B signaling. ITGAV:ITGB3 binds to PLA2G2A via a site (site 2) which is distinct from the classical ligand-binding site (site 1) and this induces integrin conformational changes and enhanced ligand binding to site 1. ITGAV:ITGB3 and ITGAV:ITGB6 act as receptors for fibrillin-1 (FBN1) and mediate R-G-D-dependent cell adhesion to FBN1. Integrin alpha-V/beta-6 or alpha-V/beta-8 (ITGAV:ITGB6 or ITGAV:ITGB8) mediates R-G-D-dependent release of transforming growth factor beta-1 (TGF-beta-1) from regulatory Latency-associated peptide (LAP), thereby playing a key role in TGF-beta-1 activation. ITGAV:ITGB3 acts as a receptor for CD40LG. ITGAV:ITGB3 acts as a receptor for IBSP and promotes cell adhesion and migration to IBSP. The polypeptide is Integrin alpha-V (ITGAV) (Gallus gallus (Chicken)).